The chain runs to 86 residues: Small ribosomal subunit protein bS20 (86 aa).

Residues 1–26 (MANIKSAKKRALQSEKSRKHNASRRT) form a disordered region.

This sequence belongs to the bacterial ribosomal protein bS20 family.

Functionally, binds directly to 16S ribosomal RNA. This Psychromonas ingrahamii (strain DSM 17664 / CCUG 51855 / 37) protein is Small ribosomal subunit protein bS20.